The sequence spans 374 residues: Glutamate 5-kinase (374 aa).

Lys-16 is a binding site for ATP. Positions 56, 143, and 155 each coordinate substrate. 175–176 serves as a coordination point for ATP; it reads TD. A PUA domain is found at 282–360; sequence KGCFVVDEGA…TRIEEILGYV (79 aa).

Belongs to the glutamate 5-kinase family.

Its subcellular location is the cytoplasm. The catalysed reaction is L-glutamate + ATP = L-glutamyl 5-phosphate + ADP. It functions in the pathway amino-acid biosynthesis; L-proline biosynthesis; L-glutamate 5-semialdehyde from L-glutamate: step 1/2. In terms of biological role, catalyzes the transfer of a phosphate group to glutamate to form L-glutamate 5-phosphate. The polypeptide is Glutamate 5-kinase (Methylococcus capsulatus (strain ATCC 33009 / NCIMB 11132 / Bath)).